Consider the following 432-residue polypeptide: EF-hand calcium-binding domain-containing protein 3 (432 aa).

EF-hand domains are found at residues Ala45 to Asn80 and Leu81 to Phe116. Ca(2+) is bound by residues Asp94, Asp96, Asp98, Lys100, and Asp105. At Tyr273 the chain carries Phosphotyrosine. The segment at Ser394–Gln432 is disordered. A compositionally biased stretch (low complexity) spans Met395–Phe411. Residues Arg420 to Gln432 show a composition bias toward basic residues.

This Mus musculus (Mouse) protein is EF-hand calcium-binding domain-containing protein 3 (Efcab3).